We begin with the raw amino-acid sequence, 176 residues long: Urease accessory protein UreE (176 aa).

This sequence belongs to the UreE family.

The protein resides in the cytoplasm. Functionally, involved in urease metallocenter assembly. Binds nickel. Probably functions as a nickel donor during metallocenter assembly. This is Urease accessory protein UreE from Helicobacter bizzozeronii.